The chain runs to 584 residues: UvrABC system protein C (584 aa).

Residues 12–89 (NKPGCYLFFN…IKKYHPKYNV (78 aa)) form the GIY-YIG domain. The UVR domain occupies 194 to 229 (NQVKQTLVKQMQKASDNLQFEQAQRIKDQITSLDFI).

The protein belongs to the UvrC family. In terms of assembly, interacts with UvrB in an incision complex.

It localises to the cytoplasm. In terms of biological role, the UvrABC repair system catalyzes the recognition and processing of DNA lesions. UvrC both incises the 5' and 3' sides of the lesion. The N-terminal half is responsible for the 3' incision and the C-terminal half is responsible for the 5' incision. The protein is UvrABC system protein C of Mycoplasma mycoides subsp. mycoides SC (strain CCUG 32753 / NCTC 10114 / PG1).